A 143-amino-acid chain; its full sequence is Transcriptional regulator SlyA (143 aa).

The 134-residue stretch at 2 to 135 folds into the HTH marR-type domain; that stretch reads ESTLGSDLSR…LTNLVERLEQ (134 aa). The H-T-H motif DNA-binding region spans 49 to 72; that stretch reads QIQLAKAIGIEQPSLVRTLDQLED.

The protein belongs to the SlyA family. Homodimer.

Its function is as follows. Transcription regulator that can specifically activate or repress expression of target genes. The sequence is that of Transcriptional regulator SlyA from Edwardsiella tarda.